Reading from the N-terminus, the 121-residue chain is Basic phospholipase A2 (121 aa).

Intrachain disulfides connect cysteine 26/cysteine 114, cysteine 28/cysteine 44, cysteine 43/cysteine 94, cysteine 49/cysteine 121, cysteine 50/cysteine 87, cysteine 57/cysteine 80, and cysteine 74/cysteine 85. Positions 27, 29, and 31 each coordinate Ca(2+). Histidine 47 is an active-site residue. Residue aspartate 48 coordinates Ca(2+). Residue aspartate 88 is part of the active site.

Homopentamer. Ca(2+) is required as a cofactor. In terms of tissue distribution, expressed by the venom gland.

It localises to the secreted. It catalyses the reaction a 1,2-diacyl-sn-glycero-3-phosphocholine + H2O = a 1-acyl-sn-glycero-3-phosphocholine + a fatty acid + H(+). In terms of biological role, snake venom phospholipase A2 (PLA2) that displays moderate myotoxic activity in vivo, and cytotoxic activity in vitro. In vitro, shows anticoagulant activity on human plasma and in mice causes inflammatory cell infiltration and myonecrosis in the gastrocnemius muscles of CD-1 mice 3 hours after injection (100 ug). PLA2 catalyzes the calcium-dependent hydrolysis of the 2-acyl groups in 3-sn-phosphoglycerides. The protein is Basic phospholipase A2 of Porthidium ophryomegas (Slender hognose viper).